The following is a 517-amino-acid chain: Ribonuclease Y (517 aa).

The helical transmembrane segment at 1–21 (MIESLIALIAAIVGLGIGYLV) threads the bilayer. A KH domain is found at 207 to 273 (LINVINIKND…TKVIELLVED (67 aa)). The HD domain maps to 333-426 (ALAHSLEVAH…VCAADTLSAA (94 aa)).

It belongs to the RNase Y family.

Its subcellular location is the cell membrane. In terms of biological role, endoribonuclease that initiates mRNA decay. The polypeptide is Ribonuclease Y (Campylobacter jejuni subsp. jejuni serotype O:6 (strain 81116 / NCTC 11828)).